The following is a 375-amino-acid chain: MDWIEREKKHILQTYTRQKVVIERGEGCYVYDVNGKRYLDLVAGIATVSIGHCNSHLVERLKEQLEKLIHISNLYYTTPQVELAEKLSEIAGMDRFFFCNSGAEAVEAALKFARRATGRKKFVSFTGDFHGRTMGALSVTHKEKFRKPFEPLVSPVEFAEFNNPESLEKVVDEETAAVIVELVQGEAGVYPADREFVKAIEELREKYGFLLIVDEVQTGFGRTGRWFAKDHYGIEPDMITMAKAMGSGVPIGCCALKEEVAEKIQVGDHGSTFGGNPLACTAALATIEVIEREGLVENSARMGEYFVKRLKESFENVIGVGLMIGFDVGDAAEFVRKCLENGLLVNNTSERRIRLVPPLVITEREVDKAVEIMLN.

Pyridoxal 5'-phosphate-binding positions include 102–103 (GA) and phenylalanine 129. Residue arginine 132 participates in N(2)-acetyl-L-ornithine binding. Pyridoxal 5'-phosphate is bound at residue 214–217 (DEVQ). The residue at position 243 (lysine 243) is an N6-(pyridoxal phosphate)lysine. Serine 271 provides a ligand contact to N(2)-acetyl-L-ornithine. Threonine 272 contacts pyridoxal 5'-phosphate.

The protein belongs to the class-III pyridoxal-phosphate-dependent aminotransferase family. ArgD subfamily. In terms of assembly, homodimer. Requires pyridoxal 5'-phosphate as cofactor.

The protein resides in the cytoplasm. The catalysed reaction is N(2)-acetyl-L-ornithine + 2-oxoglutarate = N-acetyl-L-glutamate 5-semialdehyde + L-glutamate. Its pathway is amino-acid biosynthesis; L-arginine biosynthesis; N(2)-acetyl-L-ornithine from L-glutamate: step 4/4. The sequence is that of Acetylornithine aminotransferase from Archaeoglobus fulgidus (strain ATCC 49558 / DSM 4304 / JCM 9628 / NBRC 100126 / VC-16).